Consider the following 261-residue polypeptide: Small ribosomal subunit protein eS4 (261 aa).

In terms of domain architecture, S4 RNA-binding spans Leu-42–Asp-104.

It belongs to the eukaryotic ribosomal protein eS4 family.

The protein is Small ribosomal subunit protein eS4 (RpS4) of Carabus granulatus (Ground beetle).